Consider the following 550-residue polypeptide: MKSLVLGLLVGSAIASGPLQHVLHAPPDPEPKPEPEPQVVKDPFEELRDTFDRLRNKAGDIWDDVMDNIPNIMSNMRPLTIPAKKFTRRPDSEWTHIVRGADLEALWVDDESGYKHRKIDGKLSQYDLRIKAVDPSDLGIDKVKQYSGYLDDNANDKHLFFWFFESRNDPFGDPVVLWLNGGPGCSSLTGMFFELGPASIDENITANYNPYSWNSNSSIIFLDQPVNVGYSYSSQAVSDTVTAAKDVYALLTLFFTQFRQYSAQDFHIAGESYAGHYIPVFASEILHHNNTNINLQSVLIGNGLTDPLSQYPFYRPMACGDGGYPSVLDSQSCQSMDNALPRCLSMIKSCYDIESTFTCLPASIYCNNALIGPYQKTGRNPYDVRTNCTGNDLCYPQLNYITEYLNKPHVMRSLGVEVDSYESCNMDINRNFLFHGDWMKPYHRLVPSLLARIPVLIYAGDADFICNWLGNKAWTEALEYPGHAKFAEAPMENLTMINSQGKNEVFGEVKSHSNLTFMRIFKAGHMTPFDSPQASLEFANSWLSGEWSEV.

The first 18 residues, 1-18, serve as a signal peptide directing secretion; the sequence is MKSLVLGLLVGSAIASGP. A propeptide spanning residues 19 to 131 is cleaved from the precursor; sequence LQHVLHAPPD…KLSQYDLRIK (113 aa). Residues 20 to 39 are disordered; that stretch reads QHVLHAPPDPEPKPEPEPQV. Disulfide bonds link cysteine 185–cysteine 424, cysteine 319–cysteine 333, cysteine 343–cysteine 366, cysteine 350–cysteine 359, and cysteine 388–cysteine 394. N-linked (GlcNAc...) asparagine glycosylation is found at asparagine 203 and asparagine 216. Serine 272 is an active-site residue. The N-linked (GlcNAc...) asparagine glycan is linked to asparagine 289. Asparagine 387 carries N-linked (GlcNAc...) asparagine glycosylation. Aspartate 463 is a catalytic residue. 2 N-linked (GlcNAc...) asparagine glycosylation sites follow: asparagine 493 and asparagine 514. Histidine 525 is an active-site residue.

It belongs to the peptidase S10 family.

The protein resides in the vacuole. The enzyme catalyses Release of a C-terminal amino acid with broad specificity.. In terms of biological role, vacuolar carboxypeptidase involved in degradation of small peptides. Digests preferentially peptides containing an aliphatic or hydrophobic residue in P1' position, as well as methionine, leucine or phenylalanine in P1 position of ester substrate. The sequence is that of Carboxypeptidase Y homolog A (CPYA) from Paracoccidioides brasiliensis (strain Pb18).